We begin with the raw amino-acid sequence, 74 residues long: MFTMKKSMLVLFFLGTISLSLCEEERNADEDDGEMTEEVKRGILDKLKEFGISAARGVAQSLLNTASCKLAKTC.

Residues 1 to 22 (MFTMKKSMLVLFFLGTISLSLC) form the signal peptide. Positions 23–39 (EEERNADEDDGEMTEEV) are cleaved as a propeptide — removed in mature form. A disulfide bridge connects residues Cys68 and Cys74.

In terms of tissue distribution, expressed by the skin glands.

Its subcellular location is the secreted. Antimicrobial peptide active against a variety of Gram-positive and some Gram-negative bacterial strains. Has antifungal activity against a slime mold isolate. Has hemolytic activity against human erythrocytes. This chain is Brevinin-2CG1, found in Amolops chunganensis (Chungan torrent frog).